Reading from the N-terminus, the 218-residue chain is Non-structural protein NP-1 (218 aa).

Disordered regions lie at residues 1-89 (MSSG…RTNP) and 195-218 (TESEEITDEEMLSAAESMETDASN). 2 stretches are compositionally biased toward basic residues: residues 8 to 18 (DKHRAYKRKGS) and 27 to 40 (PWQPHHRSRSRSPI). A compositionally biased stretch (polar residues) spans 58 to 67 (SHLSSCTASK). Over residues 73–86 (TKTKENTSGKRDSR) the composition is skewed to basic and acidic residues. The segment covering 196–205 (ESEEITDEEM) has biased composition (acidic residues).

The protein belongs to the Bocaparvovirus Non-structural protein NP-1 family.

The protein resides in the host nucleus. In terms of biological role, required for the expression of the capsid proteins. Performs the splicing and internal polyadenylation of the viral capsid-encoding mRNA precursor, which allows its maturation and expression. Transactivates the viral promoter. This Human bocavirus 3 (HBoV3) protein is Non-structural protein NP-1 (NP1).